The sequence spans 665 residues: Phosphatidylinositol-3-phosphate phosphatase MTMR1 (665 aa).

The residue at position 1 (Met-1) is an N-acetylmethionine. Positions 1 to 11 are enriched in low complexity; that stretch reads MDRPAAAAAAG. The segment at 1 to 51 is disordered; it reads MDRPAAAAAAGCEGGGGPNPGPAGGRRPPRAAGGATAGSRQPSVETLDSPT. A compositionally biased stretch (gly residues) spans 12–24; the sequence is CEGGGGPNPGPAG. Residues 39–51 are compositionally biased toward polar residues; the sequence is SRQPSVETLDSPT. A phosphoserine mark is found at Ser-43 and Ser-49. The GRAM domain maps to 90 to 161; it reads NKLAQMEEAP…GVISRVEKIG (72 aa). Residues 226 to 601 form the Myotubularin phosphatase domain; that stretch reads GWKVYDPVSE…SHLELWVNYY (376 aa). 3 residues coordinate a 1,2-diacyl-sn-glycero-3-phospho-(1D-myo-inositol-3-phosphate): Asn-351, Asn-376, and Ile-377. The active-site Phosphocysteine intermediate is Cys-438. Ser-439, Asp-440, Gly-441, Trp-442, Asp-443, Arg-444, and Arg-484 together coordinate a 1,2-diacyl-sn-glycero-3-phospho-(1D-myo-inositol-3-phosphate). Residue Ser-439 coordinates phosphate. The phosphate site is built by Gly-441, Trp-442, Asp-443, and Arg-444. The required for dimerization stretch occupies residues 608–665; it reads MRPQMPIHQNLKELLAVRAELQKRVEGLQREVATRAVSSSSERGSSPSHSATSVHTSV. A disordered region spans residues 642-665; the sequence is RAVSSSSERGSSPSHSATSVHTSV. Over residues 645–657 the composition is skewed to low complexity; it reads SSSSERGSSPSHS.

Belongs to the protein-tyrosine phosphatase family. Non-receptor class myotubularin subfamily. In terms of assembly, homodimer.

The protein resides in the cell membrane. The protein localises to the cytoplasm. It carries out the reaction a 1,2-diacyl-sn-glycero-3-phospho-(1D-myo-inositol-3-phosphate) + H2O = a 1,2-diacyl-sn-glycero-3-phospho-(1D-myo-inositol) + phosphate. The enzyme catalyses 1,2-dioctanoyl-sn-glycero-3-phospho-(1-D-myo-inositol-3-phosphate) + H2O = 1,2-dioctanoyl-sn-glycero-3-phospho-(1D-myo-inositol) + phosphate. It catalyses the reaction a 1,2-diacyl-sn-glycero-3-phospho-(1D-myo-inositol-3,5-bisphosphate) + H2O = a 1,2-diacyl-sn-glycero-3-phospho-(1D-myo-inositol-5-phosphate) + phosphate. Functionally, lipid phosphatase that specifically dephosphorylates the D-3 position of phosphatidylinositol 3-phosphate, generating phosphatidylinositol. Could also dephosphorylate phosphatidylinositol 3,5-bisphosphate to produce phosphatidylinositol 5-phosphate. In Homo sapiens (Human), this protein is Phosphatidylinositol-3-phosphate phosphatase MTMR1.